Consider the following 332-residue polypeptide: dTDP-3,4-didehydro-2,6-dideoxy-alpha-D-glucose 3-reductase (332 aa).

NADP(+) is bound at residue 17–23; sequence CADIAWR. Arg-24 contributes to the substrate binding site. Residues 42 to 43, Tyr-63, Leu-79, and His-84 contribute to the NADP(+) site; that span reads SR. The active-site Proton donor is the Lys-102. NADP(+) is bound by residues Arg-170 and Asp-182. Residues Tyr-240 and Thr-260 each coordinate substrate.

This sequence belongs to the Gfo/Idh/MocA family. Homotetramer; dimer of dimers.

The catalysed reaction is dTDP-4-dehydro-2,6-dideoxy-alpha-D-glucose + NADP(+) = dTDP-3,4-didehydro-2,6-dideoxy-alpha-D-glucose + NADPH + H(+). The protein operates within antibiotic biosynthesis. Its function is as follows. Involved in the biosynthesis of L-digitoxose, an unusual dideoxysugar attached to various pharmacologically active natural products, including the antitumor antibiotic tetrocarcin A, and the antibiotics kijanimicin and jadomycin B. Catalyzes the reduction of the C-3 keto moiety of dTDP-3,4-diketo-2,6-dideoxy-alpha-D-glucose to yield dTDP-4-keto-2,6-dideoxy-alpha-D-glucose. Also able to reduce dTDP-3-keto-6-deoxy-D-galactose and dTDP-3-keto-6-deoxy-D-glucose to yield dTDP-fucose and dTDP-quinovose, respectively. The chain is dTDP-3,4-didehydro-2,6-dideoxy-alpha-D-glucose 3-reductase from Actinomadura kijaniata.